We begin with the raw amino-acid sequence, 499 residues long: Lysine--tRNA ligase (499 aa).

Residues glutamate 408 and glutamate 415 each contribute to the Mg(2+) site.

It belongs to the class-II aminoacyl-tRNA synthetase family. Homodimer. Mg(2+) serves as cofactor.

The protein resides in the cytoplasm. It carries out the reaction tRNA(Lys) + L-lysine + ATP = L-lysyl-tRNA(Lys) + AMP + diphosphate. The protein is Lysine--tRNA ligase of Thermoanaerobacter sp. (strain X514).